The primary structure comprises 71 residues: Ceratotoxin-D (71 aa).

The signal sequence occupies residues Met1–Gly23. Residues Ala24–Arg35 constitute a propeptide that is removed on maturation.

As to quaternary structure, homomer of four to six subunits.

Its subcellular location is the secreted. In terms of biological role, female-specific peptides with potent activity against Gram-positive and Gram-negative bacteria. They have as well hemolytic activity. The chain is Ceratotoxin-D (CTXD) from Ceratitis capitata (Mediterranean fruit fly).